Reading from the N-terminus, the 135-residue chain is Sex-regulated protein janus-A (135 aa).

Lys-37 is a substrate binding site. The active-site Proton acceptor is the His-63. 104–106 (SQG) lines the substrate pocket.

Belongs to the janus family.

In terms of biological role, janA and janB regulate somatic sex differentiation. The polypeptide is Sex-regulated protein janus-A (janA) (Drosophila yakuba (Fruit fly)).